We begin with the raw amino-acid sequence, 352 residues long: Ubiquitin thioesterase otulin (352 aa).

Positions 1 to 48 (MSRGTMPQPEAWPGASCAETPAREAAATARDGGKAAASGQPRPEMQCP) are disordered. The segment covering 18 to 37 (AETPAREAAATARDGGKAAA) has biased composition (low complexity). The PIM motif signature appears at 52 to 57 (EEDMYR). Tyr-56 carries the post-translational modification Phosphotyrosine. Linear diubiquitin binding stretches follow at residues 95–96 (EW) and 124–126 (RGD). An OTU domain is found at 118-346 (TSIRRVRGDN…DRHYNIPVRV (229 aa)). Asp-126 is a catalytic residue. Cys-129 serves as the catalytic Nucleophile. Linear diubiquitin binding regions lie at residues 255-259 (FFSVL), 283-289 (TGGLEQV), and 336-338 (DDR). Residue His-339 is part of the active site.

The protein belongs to the peptidase C65 family. Otulin subfamily. As to quaternary structure, interacts (via the PUB domain) with RNF31 (via the PIM motif); the interaction is direct. Interacts with DVL2. Post-translationally, ubiquitinated. In terms of processing, acetylated. Phosphorylated. Phosphorylation at Tyr-56 prevents interaction with RNF31; dephosphorylation promotes interaction with RNF31 and the LUBAC complex.

The protein localises to the cytoplasm. The catalysed reaction is Thiol-dependent hydrolysis of ester, thioester, amide, peptide and isopeptide bonds formed by the C-terminal Gly of ubiquitin (a 76-residue protein attached to proteins as an intracellular targeting signal).. Its function is as follows. Deubiquitinase that specifically removes linear ('Met-1'-linked) polyubiquitin chains to substrates and acts as a regulator of angiogenesis and innate immune response. Required during angiogenesis, craniofacial and neuronal development by regulating the canonical Wnt signaling together with the LUBAC complex. Acts as a negative regulator of NF-kappa-B by regulating the activity of the LUBAC complex. OTULIN function is mainly restricted to homeostasis of the LUBAC complex: acts by removing 'Met-1'-linked autoubiquitination of the LUBAC complex, thereby preventing inactivation of the LUBAC complex. Acts as a key negative regulator of inflammation by restricting spontaneous inflammation and maintaining immune homeostasis. In myeloid cell, required to prevent unwarranted secretion of cytokines leading to inflammation and autoimmunity by restricting linear polyubiquitin formation. Plays a role in innate immune response by restricting linear polyubiquitin formation on LUBAC complex in response to NOD2 stimulation, probably to limit NOD2-dependent pro-inflammatory signaling. The polypeptide is Ubiquitin thioesterase otulin (Homo sapiens (Human)).